A 213-amino-acid chain; its full sequence is NADH dehydrogenase [ubiquinone] iron-sulfur protein 7, mitochondrial (213 aa).

A mitochondrion-targeting transit peptide spans 1–37 (MAVLSAPGLRGFRILGLRSSVGPAVQARSVHQSVATD). The span at 30-44 (VHQSVATDGPSSTQP) shows a compositional bias: polar residues. The segment at 30 to 53 (VHQSVATDGPSSTQPALPKARAVA) is disordered. Residues Cys88 and Cys89 each contribute to the [4Fe-4S] cluster site. Arg111 is modified (hydroxyarginine). Residues Cys153 and Cys183 each coordinate [4Fe-4S] cluster.

The protein belongs to the complex I 20 kDa subunit family. Core subunit of respiratory chain NADH dehydrogenase (Complex I) which is composed of 45 different subunits. This is a component of the iron-sulfur (IP) fragment of the enzyme. The cofactor is [4Fe-4S] cluster. In terms of processing, hydroxylated ar Arg-111 by NDUFAF5 early in the pathway of assembly of complex I, before the formation of the juncture between peripheral and membrane arms.

Its subcellular location is the mitochondrion inner membrane. It carries out the reaction a ubiquinone + NADH + 5 H(+)(in) = a ubiquinol + NAD(+) + 4 H(+)(out). Functionally, core subunit of the mitochondrial membrane respiratory chain NADH dehydrogenase (Complex I) which catalyzes electron transfer from NADH through the respiratory chain, using ubiquinone as an electron acceptor. Essential for the catalytic activity of complex I. This chain is NADH dehydrogenase [ubiquinone] iron-sulfur protein 7, mitochondrial (NDUFS7), found in Pan troglodytes (Chimpanzee).